Reading from the N-terminus, the 1238-residue chain is Inner capsid protein VP2 (1238 aa).

The segment at 1–35 (MSTSAKKTPESKTEDKIEPVIEQTSNDKPEPPPNK) is disordered. Residues 7-30 (KTPESKTEDKIEPVIEQTSNDKPE) are compositionally biased toward basic and acidic residues.

Belongs to the turreted BTV-fold inner capsid family. In terms of assembly, homodecamer; each decamer is made up of two conformers of VP2, called VP2A and VP2B. 12 homodecamers assemble to form an icosahedral capsid.

The protein resides in the virion. In terms of biological role, inner capsid protein that self-assembles to form an icosahedral capsid with a T=2 symmetry, which consists of 120 copies of VP2, with channels at each of its five-fold vertices. This capsid constitutes the innermost concentric layer of the viral mature particle. This Cryphonectria parasitica (Chestnut blight fungus) protein is Inner capsid protein VP2 (S2).